The following is a 140-amino-acid chain: Large-conductance mechanosensitive channel (140 aa).

The next 2 membrane-spanning stretches (helical) occupy residues 14–34 (VMDL…TGSL) and 85–105 (GAFV…FLLV).

This sequence belongs to the MscL family. As to quaternary structure, homopentamer.

Its subcellular location is the cell inner membrane. Functionally, channel that opens in response to stretch forces in the membrane lipid bilayer. May participate in the regulation of osmotic pressure changes within the cell. This is Large-conductance mechanosensitive channel from Sphingopyxis alaskensis (strain DSM 13593 / LMG 18877 / RB2256) (Sphingomonas alaskensis).